We begin with the raw amino-acid sequence, 297 residues long: 4-hydroxybenzoate octaprenyltransferase (297 aa).

Helical transmembrane passes span 29 to 49 (IGTY…AEGV), 55 to 75 (LFIF…VNDF), 102 to 122 (AWTL…LTNA), 124 to 141 (TVYL…YPFM), 146 to 166 (FYPQ…AFTA), 169 to 189 (GSLP…TVAY), 219 to 239 (VIIV…GVRF), 241 to 261 (LGQW…WEFW), and 270 to 290 (VCFK…AGIV).

The protein belongs to the UbiA prenyltransferase family. It depends on Mg(2+) as a cofactor.

The protein localises to the cell inner membrane. It carries out the reaction all-trans-octaprenyl diphosphate + 4-hydroxybenzoate = 4-hydroxy-3-(all-trans-octaprenyl)benzoate + diphosphate. It participates in cofactor biosynthesis; ubiquinone biosynthesis. Its function is as follows. Catalyzes the prenylation of para-hydroxybenzoate (PHB) with an all-trans polyprenyl group. Mediates the second step in the final reaction sequence of ubiquinone-8 (UQ-8) biosynthesis, which is the condensation of the polyisoprenoid side chain with PHB, generating the first membrane-bound Q intermediate 3-octaprenyl-4-hydroxybenzoate. In Stutzerimonas stutzeri (strain A1501) (Pseudomonas stutzeri), this protein is 4-hydroxybenzoate octaprenyltransferase.